The following is a 231-amino-acid chain: Killer cell lectin-like receptor subfamily F member 1 (231 aa).

Residues 1 to 38 lie on the Cytoplasmic side of the membrane; the sequence is MQDEERYMTLNVQSKKRSSAQTSQLTFKDYSVTLHWYK. Tyr-7 carries the phosphotyrosine modification. Residues 39-59 form a helical; Signal-anchor for type II membrane protein membrane-spanning segment; that stretch reads ILLGISGTVNGILTLTLISLI. Topologically, residues 60–231 are extracellular; that stretch reads LLVSQGVLLK…SSVFKWICQY (172 aa). N-linked (GlcNAc...) asparagine glycosylation is found at Asn-77, Asn-91, Asn-96, and Asn-176. Residues 121–230 form the C-type lectin domain; sequence YQGKCYWFSN…CSSVFKWICQ (110 aa). 2 disulfides stabilise this stretch: Cys-142-Cys-229 and Cys-208-Cys-221.

As to quaternary structure, homodimer. Interacts with CLEC2B. Post-translationally, phosphorylated on Tyr-7; this phosphorylation is required for NKp80/KLRF1-mediated cytotoxicity. As to expression, strongly expressed in peripheral blood leukocytes and spleen, with weaker expression in lymph node and adult liver, and no expression detected in bone marrow, thymus, and fetal liver. Not expressed in brain, heart, placenta, lung, kidney, skeletal muscle, and pancreas. Within peripheral blood leukocyte and immunocyte cell lines, expression was predominant in NK cells but was also detected in monocytes.

Its subcellular location is the membrane. In terms of biological role, functions as an activating receptor involved in immunosurveillance upon binding to various ligands displayed at the surface of myeloid cells. Upon interaction with CLEC2B ligand, stimulates NK-cell cytotoxicity and cytokine production leading to the cytolysis of malignant CLEC2B-expressing myeloid cells. Actviation of the common cytotoxicity pathway involves SRC and SYK kinases. This is Killer cell lectin-like receptor subfamily F member 1 (KLRF1) from Homo sapiens (Human).